Reading from the N-terminus, the 101-residue chain is Large ribosomal subunit protein uL24 (101 aa).

Belongs to the universal ribosomal protein uL24 family. In terms of assembly, part of the 50S ribosomal subunit.

Functionally, one of two assembly initiator proteins, it binds directly to the 5'-end of the 23S rRNA, where it nucleates assembly of the 50S subunit. Its function is as follows. One of the proteins that surrounds the polypeptide exit tunnel on the outside of the subunit. The chain is Large ribosomal subunit protein uL24 from Streptococcus equi subsp. zooepidemicus (strain H70).